The primary structure comprises 364 residues: Myeloid cell surface antigen CD33 (364 aa).

The signal sequence occupies residues 1–17 (MPLLLLLPLLWAGALAM). The Extracellular portion of the chain corresponds to 18–259 (DPNFWLQVQE…KQETRAGVVH (242 aa)). Residues 19 to 135 (PNFWLQVQES…KYSYKSPQLS (117 aa)) enclose the Ig-like V-type domain. Intrachain disulfides connect Cys36–Cys169, Cys41–Cys101, and Cys163–Cys212. 2 N-linked (GlcNAc...) asparagine glycosylation sites follow: Asn100 and Asn113. Arg119 provides a ligand contact to N-acetylneuraminate. Residues 145–228 (PKILIPGTLE…AGVTTERTIQ (84 aa)) enclose the Ig-like C2-type domain. Residue Glu154 coordinates D-galactose. Residues Asn160, Asn209, and Asn230 are each glycosylated (N-linked (GlcNAc...) asparagine). A helical membrane pass occupies residues 260 to 282 (GAIGGAGVTALLALCLCLIFFIV). The Cytoplasmic segment spans residues 283–364 (KTHRRKAART…STEYSEVRTQ (82 aa)). Residues 290-364 (ARTAVGRNDT…STEYSEVRTQ (75 aa)) form a disordered region. 2 consecutive short sequence motifs (ITIM motif) follow at residues 338 to 343 (LHYASL) and 356 to 361 (TEYSEV). Residues Tyr340 and Tyr358 each carry the phosphotyrosine; by LCK modification.

The protein belongs to the immunoglobulin superfamily. SIGLEC (sialic acid binding Ig-like lectin) family. In terms of assembly, homodimer; disulfide-linked. Interacts with PTPN6/SHP-1 and PTPN11/SHP-2 upon phosphorylation. Interacts with C1QA (via C-terminus); this interaction activates CD33 inhibitory motifs. Glycosylated. Glycosylation at Asn-100 is critical for regulating ligand recognition. Post-translationally, phosphorylation of Tyr-340 is involved in binding to PTPN6 and PTPN11. Phosphorylation of Tyr-358 is involved in binding to PTPN6. LCK phosphorylates Tyr-340 efficiently and Tyr-358 to a lesser extent. In terms of tissue distribution, monocytic/myeloid lineage cells. In the brain, CD33 is mainly expressed on microglial cells.

The protein resides in the cell membrane. It localises to the peroxisome. Sialic-acid-binding immunoglobulin-like lectin (Siglec) that plays a role in mediating cell-cell interactions and in maintaining immune cells in a resting state. Preferentially recognizes and binds alpha-2,3- and more avidly alpha-2,6-linked sialic acid-bearing glycans. Upon engagement of ligands such as C1q or syalylated glycoproteins, two immunoreceptor tyrosine-based inhibitory motifs (ITIMs) located in CD33 cytoplasmic tail are phosphorylated by Src-like kinases such as LCK. These phosphorylations provide docking sites for the recruitment and activation of protein-tyrosine phosphatases PTPN6/SHP-1 and PTPN11/SHP-2. In turn, these phosphatases regulate downstream pathways through dephosphorylation of signaling molecules. One of the repressive effect of CD33 on monocyte activation requires phosphoinositide 3-kinase/PI3K. The sequence is that of Myeloid cell surface antigen CD33 (CD33) from Homo sapiens (Human).